The following is a 366-amino-acid chain: S-adenosylmethionine:tRNA ribosyltransferase-isomerase (366 aa).

Belongs to the QueA family. As to quaternary structure, monomer.

It is found in the cytoplasm. The catalysed reaction is 7-aminomethyl-7-carbaguanosine(34) in tRNA + S-adenosyl-L-methionine = epoxyqueuosine(34) in tRNA + adenine + L-methionine + 2 H(+). It participates in tRNA modification; tRNA-queuosine biosynthesis. Functionally, transfers and isomerizes the ribose moiety from AdoMet to the 7-aminomethyl group of 7-deazaguanine (preQ1-tRNA) to give epoxyqueuosine (oQ-tRNA). The sequence is that of S-adenosylmethionine:tRNA ribosyltransferase-isomerase from Agrobacterium fabrum (strain C58 / ATCC 33970) (Agrobacterium tumefaciens (strain C58)).